A 425-amino-acid chain; its full sequence is MSADLAQLVTLIAQRARAASLTLATTSTAAKNSALLRLADLIAGSTLPLLNANQLDIAAAKKHGLTQAQIDRLTLTPIRLTQLADSVRHVATLPDPVGEVLEETTRPNGLVLRRVRVPIGVIGIIYEARPNVTIDCAALCLKSGNAAILRGGKESFHTNTALAALIAQALSAAELPADAVQLIPTTERAALTHLLTLDSLVHCIIPRGGESLIRFVAEHSTIPVIKHYKGVCFVYVDREAHLKMAEQIVVNAKTSRPGVCNAAEQLLVHRGVATKFLPAIARALNAAHPVELRCDAESAAILAQENLPHVAASDADFSTEFLDYILAVRVVDSIDTAIATINRDSSNHSDAIVTNDTSAANRFLAGVDSAAVFWNASTRFNDGVEFGLGAEIGISTDRLHARGPMGLRELCSYKWLVSGIGQVRS.

The protein belongs to the gamma-glutamyl phosphate reductase family.

It is found in the cytoplasm. The catalysed reaction is L-glutamate 5-semialdehyde + phosphate + NADP(+) = L-glutamyl 5-phosphate + NADPH + H(+). Its pathway is amino-acid biosynthesis; L-proline biosynthesis; L-glutamate 5-semialdehyde from L-glutamate: step 2/2. Its function is as follows. Catalyzes the NADPH-dependent reduction of L-glutamate 5-phosphate into L-glutamate 5-semialdehyde and phosphate. The product spontaneously undergoes cyclization to form 1-pyrroline-5-carboxylate. This is Gamma-glutamyl phosphate reductase from Opitutus terrae (strain DSM 11246 / JCM 15787 / PB90-1).